The chain runs to 331 residues: ADP,ATP carrier protein 1, mitochondrial (331 aa).

Solcar repeat units follow at residues 29–122 (KNFA…FKRM), 134–226 (KWFG…LKPV), and 238–320 (ASFA…LQIL). The next 5 helical transmembrane spans lie at 31–58 (FAID…VKLL), 99–123 (TANV…KRMF), 132–152 (YWKW…SSLF), 202–223 (FNIS…YDSL), and 237–257 (FASF…SYPI). The ADP site is built by Arg104 and Lys116. Arg261 contacts ADP. Positions 261–266 (RRRMMM) are important for transport activity. Positions 261-266 (RRRMMM) match the Nucleotide carrier signature motif motif. Residues 297–317 (AGANILRAIAGAGVLSGYDQL) form a helical membrane-spanning segment.

It belongs to the mitochondrial carrier (TC 2.A.29) family. As to quaternary structure, monomer.

Its subcellular location is the mitochondrion inner membrane. The enzyme catalyses ADP(in) + ATP(out) = ADP(out) + ATP(in). The matrix-open state (m-state) is inhibited by the membrane-permeable bongkrekic acid (BKA). The cytoplasmic-open state (c-state) is inhibited by the membrane-impermeable toxic inhibitor carboxyatractyloside (CATR). Functionally, ADP:ATP antiporter that mediates import of ADP into the mitochondrial matrix for ATP synthesis, and export of ATP out to fuel the cell. Cycles between the cytoplasmic-open state (c-state) and the matrix-open state (m-state): operates by the alternating access mechanism with a single substrate-binding site intermittently exposed to either the cytosolic (c-state) or matrix (m-state) side of the inner mitochondrial membrane. The protein is ADP,ATP carrier protein 1, mitochondrial (ANT-G1) of Triticum aestivum (Wheat).